We begin with the raw amino-acid sequence, 329 residues long: Serine, glycine and glutamine-rich protein (329 aa).

An N-terminal signal peptide occupies residues 1-16 (MKTVLLFVVLVGLAYC). Over residues 38-48 (SSSSSSSSSSS) the composition is skewed to low complexity. Residues 38–80 (SSSSSSSSSSSSGGGGSSGGGASGGGGGSSSGGGGASGGGGGG) form a disordered region. A compositionally biased stretch (gly residues) spans 49–80 (SGGGGSSGGGASGGGGGSSSGGGGASGGGGGG).

As to expression, prismatic layer of shell (at protein level). Expressed primarily in the mantle with highest level in the mantle edge and lower level in the mantle pallium.

The protein resides in the secreted. The protein is Serine, glycine and glutamine-rich protein of Pinctada maxima (Silver-lipped pearl oyster).